The following is a 240-amino-acid chain: tRNA pseudouridine synthase A (240 aa).

Aspartate 50 acts as the Nucleophile in catalysis. Tyrosine 109 is a substrate binding site.

The protein belongs to the tRNA pseudouridine synthase TruA family. As to quaternary structure, homodimer.

It catalyses the reaction uridine(38/39/40) in tRNA = pseudouridine(38/39/40) in tRNA. In terms of biological role, formation of pseudouridine at positions 38, 39 and 40 in the anticodon stem and loop of transfer RNAs. The sequence is that of tRNA pseudouridine synthase A from Campylobacter jejuni (strain RM1221).